The primary structure comprises 325 residues: Mitochondrial thiamine pyrophosphate carrier 1 (325 aa).

3 Solcar repeats span residues 12-111 (GSRL…TTLL), 122-209 (PPSA…LRPH), and 216-312 (PFSS…ALKF). The next 6 membrane-spanning stretches (helical) occupy residues 17 to 35 (VTAA…IAPL), 92 to 108 (LLYV…YRTT), 127 to 143 (SFVA…AATY), 184 to 200 (VWDR…SFFF), 223 to 239 (VART…TFPL), and 287 to 304 (GLTV…VTMW).

It belongs to the mitochondrial carrier (TC 2.A.29) family.

It localises to the mitochondrion inner membrane. Mitochondrial transporter that mediates uptake of thiamine pyrophosphate (ThPP) into mitochondria. The chain is Mitochondrial thiamine pyrophosphate carrier 1 (TPC1) from Chaetomium globosum (strain ATCC 6205 / CBS 148.51 / DSM 1962 / NBRC 6347 / NRRL 1970) (Soil fungus).